Here is a 668-residue protein sequence, read N- to C-terminus: uncharacterized protein (668 aa).

A run of 9 helical transmembrane segments spans residues 182–202, 208–228, 286–306, 321–341, 379–399, 430–450, 499–519, 557–577, and 587–607; these read FAFA…GILG, PYSY…IQFW, VPLF…AFIV, IVSL…TFIY, ALFL…PHYI, IYFL…VPQL, FVLM…APIF, LSLL…FYSS, and VIAA…RMFI.

It is found in the membrane. This is an uncharacterized protein from Schizosaccharomyces pombe (strain 972 / ATCC 24843) (Fission yeast).